We begin with the raw amino-acid sequence, 161 residues long: Urease accessory protein UreE (161 aa).

Residues 133 to 161 (EPEAGAYQSAPHSHSHAHDHPFVRLPAHS) are disordered.

Belongs to the UreE family.

The protein resides in the cytoplasm. Its function is as follows. Involved in urease metallocenter assembly. Binds nickel. Probably functions as a nickel donor during metallocenter assembly. The protein is Urease accessory protein UreE of Pseudomonas putida (strain W619).